The following is a 98-amino-acid chain: Citrate lyase acyl carrier protein (98 aa).

The residue at position 14 (Ser14) is an O-(phosphoribosyl dephospho-coenzyme A)serine.

Belongs to the CitD family. In terms of assembly, oligomer with a subunit composition of (alpha,beta,gamma)6.

Its subcellular location is the cytoplasm. Covalent carrier of the coenzyme of citrate lyase. This is Citrate lyase acyl carrier protein from Citrobacter koseri (strain ATCC BAA-895 / CDC 4225-83 / SGSC4696).